An 818-amino-acid chain; its full sequence is Histone H2A deubiquitinase MYSM1 (818 aa).

Positions 107–158 (SSPVKWTKEEKNLFEQGLATFGRRWTSIARLIGSRSVLQVKNYARHYFKNKC) constitute an SANT domain. Positions 344-442 (IKPPDQELEI…FGCEQAIYNR (99 aa)) constitute an SWIRM domain. The region spanning 548–680 (VKVSCEAMLV…PHPQSQVACL (133 aa)) is the MPN domain. The Zn(2+) site is built by histidine 627, histidine 629, and aspartate 640. A JAMM motif motif is present at residues 627–640 (HSHPAFDPNPSIRD). Residues 745-749 (LQKLL) carry the LXXLL motif motif.

The protein belongs to the peptidase M67A family. MYSM1 subfamily.

The protein localises to the nucleus. Functionally, metalloprotease that specifically deubiquitinates monoubiquitinated histone H2A, a specific tag for epigenetic transcriptional repression, thereby acting as a coactivator. Preferentially deubiquitinates monoubiquitinated H2A in hyperacetylated nucleosomes. Deubiquitination of histone H2A leads to facilitate the phosphorylation and dissociation of histone H1 from the nucleosome. Acts as a coactivator by participating in the initiation and elongation steps of androgen receptor (AR)-induced gene activation. This chain is Histone H2A deubiquitinase MYSM1 (mysm1), found in Xenopus laevis (African clawed frog).